The chain runs to 269 residues: Cytochrome c oxidase subunit 3 (269 aa).

7 helical membrane-spanning segments follow: residues 7–29, 51–71, 90–110, 127–147, 167–187, 205–225, and 247–267; these read GYLQLHPFHLVGPSPWPIFTSFS, IILSIITVLYSMTLWFKDIIA, GFLLFVVSEILIFASLFWAYL, VGIDVISPAELPLLNTIILLA, TLYGFIYSTLLIALFVMFQFL, FYSLTGLHGLHMIMLTIMLVI, and ILYLHVLDVIWLFIYIIVYWW.

This sequence belongs to the cytochrome c oxidase subunit 3 family. In terms of assembly, component of the cytochrome c oxidase (complex IV, CIV), a multisubunit enzyme composed of a catalytic core of 3 subunits and several supernumerary subunits. The complex exists as a monomer or a dimer and forms supercomplexes (SCs) in the inner mitochondrial membrane with ubiquinol-cytochrome c oxidoreductase (cytochrome b-c1 complex, complex III, CIII).

The protein localises to the mitochondrion inner membrane. The catalysed reaction is 4 Fe(II)-[cytochrome c] + O2 + 8 H(+)(in) = 4 Fe(III)-[cytochrome c] + 2 H2O + 4 H(+)(out). Component of the cytochrome c oxidase, the last enzyme in the mitochondrial electron transport chain which drives oxidative phosphorylation. The respiratory chain contains 3 multisubunit complexes succinate dehydrogenase (complex II, CII), ubiquinol-cytochrome c oxidoreductase (cytochrome b-c1 complex, complex III, CIII) and cytochrome c oxidase (complex IV, CIV), that cooperate to transfer electrons derived from NADH and succinate to molecular oxygen, creating an electrochemical gradient over the inner membrane that drives transmembrane transport and the ATP synthase. Cytochrome c oxidase is the component of the respiratory chain that catalyzes the reduction of oxygen to water. Electrons originating from reduced cytochrome c in the intermembrane space (IMS) are transferred via the dinuclear copper A center (CU(A)) of subunit 2 and heme A of subunit 1 to the active site in subunit 1, a binuclear center (BNC) formed by heme A3 and copper B (CU(B)). The BNC reduces molecular oxygen to 2 water molecules using 4 electrons from cytochrome c in the IMS and 4 protons from the mitochondrial matrix. The protein is Cytochrome c oxidase subunit 3 (COX3) of Candida parapsilosis (Yeast).